The sequence spans 664 residues: Sorbicillinoid biosynthetic cluster transcription factor sor3 (664 aa).

The zn(2)-C6 fungal-type DNA-binding region spans 40–67 (CQSCRASKVKCDGGRPVCARCQKRGRAC). Positions 68–102 (SYSQHDAASPRGRGRQRAKAPTRQPRPIRSRASVE) are disordered.

It is found in the nucleus. In terms of biological role, transcription factor that acts in concert with sor4 which is a transcriptional activator of the gene cluster that mediates the biosynthesis of sorbicillinoids, a diverse group of yellow secondary metabolites that restrict growth of competing pathogenic fungi but not of bacteria. Regulates the cluster genes in a light dependent manner. Also plays a direct or indirect role in regulation of paracelsin biosynthesis and cellulase gene expression. The chain is Sorbicillinoid biosynthetic cluster transcription factor sor3 from Hypocrea jecorina (strain QM6a) (Trichoderma reesei).